Here is a 449-residue protein sequence, read N- to C-terminus: Argininosuccinate synthase (449 aa).

ATP contacts are provided by residues 17–25 (AFSGGLDTS) and Ala43. Tyr99 lines the L-citrulline pocket. 2 residues coordinate ATP: Gly129 and Thr131. The L-aspartate site is built by Thr131, Asn135, and Asp136. Asn135 contacts L-citrulline. Asp136 contributes to the ATP binding site. L-citrulline-binding residues include Arg139 and Ser192. Asp194 serves as a coordination point for ATP. L-citrulline is bound by residues Thr201, Glu203, and Glu280.

This sequence belongs to the argininosuccinate synthase family. Type 2 subfamily. In terms of assembly, homotetramer.

It is found in the cytoplasm. It carries out the reaction L-citrulline + L-aspartate + ATP = 2-(N(omega)-L-arginino)succinate + AMP + diphosphate + H(+). It functions in the pathway amino-acid biosynthesis; L-arginine biosynthesis; L-arginine from L-ornithine and carbamoyl phosphate: step 2/3. The polypeptide is Argininosuccinate synthase (Dickeya dadantii (strain 3937) (Erwinia chrysanthemi (strain 3937))).